The sequence spans 199 residues: Probable adenine phosphoribosyltransferase (199 aa).

The protein belongs to the purine/pyrimidine phosphoribosyltransferase family. In terms of assembly, homodimer.

It is found in the cytoplasm. It carries out the reaction AMP + diphosphate = 5-phospho-alpha-D-ribose 1-diphosphate + adenine. It participates in purine metabolism; AMP biosynthesis via salvage pathway; AMP from adenine: step 1/1. Catalyzes a salvage reaction resulting in the formation of AMP, that is energically less costly than de novo synthesis. This chain is Probable adenine phosphoribosyltransferase (aprt), found in Dictyostelium discoideum (Social amoeba).